The primary structure comprises 485 residues: tRNA sulfurtransferase (485 aa).

The THUMP domain occupies 63–167 (ERYAERLACI…NEHLYLVEKR (105 aa)). ATP-binding positions include 185–186 (LI), lysine 267, glycine 289, and glutamine 298. Cysteine 346 and cysteine 458 are disulfide-bonded. Positions 406–484 (VSGGEVVVDI…GYHNVKVYRP (79 aa)) constitute a Rhodanese domain. Cysteine 458 functions as the Cysteine persulfide intermediate in the catalytic mechanism.

This sequence belongs to the ThiI family.

It localises to the cytoplasm. The enzyme catalyses [ThiI sulfur-carrier protein]-S-sulfanyl-L-cysteine + a uridine in tRNA + 2 reduced [2Fe-2S]-[ferredoxin] + ATP + H(+) = [ThiI sulfur-carrier protein]-L-cysteine + a 4-thiouridine in tRNA + 2 oxidized [2Fe-2S]-[ferredoxin] + AMP + diphosphate. It carries out the reaction [ThiS sulfur-carrier protein]-C-terminal Gly-Gly-AMP + S-sulfanyl-L-cysteinyl-[cysteine desulfurase] + AH2 = [ThiS sulfur-carrier protein]-C-terminal-Gly-aminoethanethioate + L-cysteinyl-[cysteine desulfurase] + A + AMP + 2 H(+). The protein operates within cofactor biosynthesis; thiamine diphosphate biosynthesis. Its function is as follows. Catalyzes the ATP-dependent transfer of a sulfur to tRNA to produce 4-thiouridine in position 8 of tRNAs, which functions as a near-UV photosensor. Also catalyzes the transfer of sulfur to the sulfur carrier protein ThiS, forming ThiS-thiocarboxylate. This is a step in the synthesis of thiazole, in the thiamine biosynthesis pathway. The sulfur is donated as persulfide by IscS. The polypeptide is tRNA sulfurtransferase (Shewanella loihica (strain ATCC BAA-1088 / PV-4)).